A 136-amino-acid polypeptide reads, in one-letter code: Protein LpdD (136 aa).

It belongs to the CinA family.

Functionally, probably involved in tannin degradation, however the precise biochemical function in metabolism of gallate is unknown. The sequence is that of Protein LpdD from Lactiplantibacillus plantarum (strain ATCC BAA-793 / NCIMB 8826 / WCFS1) (Lactobacillus plantarum).